Here is a 209-residue protein sequence, read N- to C-terminus: Large ribosomal subunit protein uL3 (209 aa).

Residues 121–154 are disordered; it reads GGIKRHNFHRGPMAHGSKYHRRPGSSAAKGPART.

This sequence belongs to the universal ribosomal protein uL3 family. As to quaternary structure, part of the 50S ribosomal subunit. Forms a cluster with proteins L14 and L19.

One of the primary rRNA binding proteins, it binds directly near the 3'-end of the 23S rRNA, where it nucleates assembly of the 50S subunit. In Desulforamulus reducens (strain ATCC BAA-1160 / DSM 100696 / MI-1) (Desulfotomaculum reducens), this protein is Large ribosomal subunit protein uL3.